Consider the following 1156-residue polypeptide: Chromosome partition protein Smc (1156 aa).

37–44 (PNGAGKSN) serves as a coordination point for ATP. A coiled-coil region spans residues 167–499 (SGIGEYERKK…AIEREVRSFS (333 aa)). In terms of domain architecture, SMC hinge spans 509–624 (KGVYGSVSEL…VENFESAKAI (116 aa)). Residues 654–1001 (GELNKRYYEE…EETENKKRKV (348 aa)) adopt a coiled-coil conformation.

This sequence belongs to the SMC family. As to quaternary structure, homodimer.

The protein resides in the cytoplasm. Required for chromosome condensation and partitioning. In Aquifex aeolicus (strain VF5), this protein is Chromosome partition protein Smc.